Here is a 386-residue protein sequence, read N- to C-terminus: Cytochrome b (386 aa).

4 helical membrane-spanning segments follow: residues 32–52 (LGSL…FLAM), 76–98 (WFIR…IHIG), 113–133 (VWNV…LGYC), and 179–199 (FFAF…MHFM). Heme b contacts are provided by His82 and His96. His183 and His197 together coordinate heme b. His202 is a binding site for a ubiquinone. 4 consecutive transmembrane segments (helical) span residues 225-245 (FIFK…LFVF), 289-309 (LLGV…PITD), 321-341 (FSKF…HLGE), and 348-368 (FVVM…VIVP).

The protein belongs to the cytochrome b family. In terms of assembly, fungal cytochrome b-c1 complex contains 10 subunits; 3 respiratory subunits, 2 core proteins and 5 low-molecular weight proteins. Cytochrome b-c1 complex is a homodimer. Heme b serves as cofactor.

The protein resides in the mitochondrion inner membrane. Functionally, component of the ubiquinol-cytochrome c reductase complex (complex III or cytochrome b-c1 complex) that is part of the mitochondrial respiratory chain. The b-c1 complex mediates electron transfer from ubiquinol to cytochrome c. Contributes to the generation of a proton gradient across the mitochondrial membrane that is then used for ATP synthesis. This Kluyveromyces lactis (strain ATCC 8585 / CBS 2359 / DSM 70799 / NBRC 1267 / NRRL Y-1140 / WM37) (Yeast) protein is Cytochrome b (COB).